A 102-amino-acid polypeptide reads, in one-letter code: NADH-quinone oxidoreductase subunit K 1 (102 aa).

Transmembrane regions (helical) follow at residues 3–23, 29–49, and 62–82; these read TLTT…LGIL, VGML…FMAF, and IIAL…LSII.

Belongs to the complex I subunit 4L family. NDH-1 is composed of 14 different subunits. Subunits NuoA, H, J, K, L, M, N constitute the membrane sector of the complex.

The protein localises to the cell inner membrane. The catalysed reaction is a quinone + NADH + 5 H(+)(in) = a quinol + NAD(+) + 4 H(+)(out). Functionally, NDH-1 shuttles electrons from NADH, via FMN and iron-sulfur (Fe-S) centers, to quinones in the respiratory chain. The immediate electron acceptor for the enzyme in this species is believed to be ubiquinone. Couples the redox reaction to proton translocation (for every two electrons transferred, four hydrogen ions are translocated across the cytoplasmic membrane), and thus conserves the redox energy in a proton gradient. The sequence is that of NADH-quinone oxidoreductase subunit K 1 from Syntrophobacter fumaroxidans (strain DSM 10017 / MPOB).